A 1155-amino-acid polypeptide reads, in one-letter code: DNA-directed RNA polymerase subunit beta (1155 aa).

This sequence belongs to the RNA polymerase beta chain family. The RNAP catalytic core consists of 2 alpha, 1 beta, 1 beta' and 1 omega subunit. When a sigma factor is associated with the core the holoenzyme is formed, which can initiate transcription.

It carries out the reaction RNA(n) + a ribonucleoside 5'-triphosphate = RNA(n+1) + diphosphate. Its function is as follows. DNA-dependent RNA polymerase catalyzes the transcription of DNA into RNA using the four ribonucleoside triphosphates as substrates. The chain is DNA-directed RNA polymerase subunit beta from Borrelia recurrentis (strain A1).